The primary structure comprises 670 residues: UvrABC system protein B (670 aa).

The 383-residue stretch at 51–433 (DGLKKGEPFQ…SSRVVEQIIR (383 aa)) folds into the Helicase ATP-binding domain. Residue 64–71 (GVTGSGKT) participates in ATP binding. The short motif at 117–140 (YYDYYQPESYLPAKDQYIEKDAMI) is the Beta-hairpin element. One can recognise a Helicase C-terminal domain in the interval 453-612 (DVMQEIRKIV…IVPTTIRKPI (160 aa)). In terms of domain architecture, UVR spans 631 to 666 (PNVIIELDAEMREAADRLDFERAIQVRELIKKLEKE).

The protein belongs to the UvrB family. In terms of assembly, forms a heterotetramer with UvrA during the search for lesions. Interacts with UvrC in an incision complex.

Its subcellular location is the cytoplasm. Its function is as follows. The UvrABC repair system catalyzes the recognition and processing of DNA lesions. A damage recognition complex composed of 2 UvrA and 2 UvrB subunits scans DNA for abnormalities. Upon binding of the UvrA(2)B(2) complex to a putative damaged site, the DNA wraps around one UvrB monomer. DNA wrap is dependent on ATP binding by UvrB and probably causes local melting of the DNA helix, facilitating insertion of UvrB beta-hairpin between the DNA strands. Then UvrB probes one DNA strand for the presence of a lesion. If a lesion is found the UvrA subunits dissociate and the UvrB-DNA preincision complex is formed. This complex is subsequently bound by UvrC and the second UvrB is released. If no lesion is found, the DNA wraps around the other UvrB subunit that will check the other stand for damage. This is UvrABC system protein B from Methanosarcina mazei (strain ATCC BAA-159 / DSM 3647 / Goe1 / Go1 / JCM 11833 / OCM 88) (Methanosarcina frisia).